Reading from the N-terminus, the 481-residue chain is Cardiolipin synthase A (481 aa).

The next 2 helical transmembrane spans lie at 10 to 30 (FFGY…LHAL) and 40 to 60 (IAWA…YLIF). PLD phosphodiesterase domains follow at residues 220–247 (VNFR…GDEY) and 394–421 (QPGF…DNRS). Residues histidine 225, lysine 227, aspartate 232, histidine 399, lysine 401, and aspartate 406 contribute to the active site.

This sequence belongs to the phospholipase D family. Cardiolipin synthase subfamily. ClsA sub-subfamily.

The protein localises to the cell inner membrane. It carries out the reaction 2 a 1,2-diacyl-sn-glycero-3-phospho-(1'-sn-glycerol) = a cardiolipin + glycerol. Its function is as follows. Catalyzes the reversible phosphatidyl group transfer from one phosphatidylglycerol molecule to another to form cardiolipin (CL) (diphosphatidylglycerol) and glycerol. The polypeptide is Cardiolipin synthase A (Pseudomonas putida (Arthrobacter siderocapsulatus)).